The following is a 315-amino-acid chain: Olfactory receptor 2V2 (315 aa).

Over 1–26 the chain is Extracellular; sequence METWVNQSYTDGFFLLGIFSHSTADL. Asparagine 6 is a glycosylation site (N-linked (GlcNAc...) asparagine). Residues 27-50 form a helical membrane-spanning segment; sequence VLFSVVMAVFTVALCGNVLLIFLI. At 51-58 the chain is on the cytoplasmic side; it reads YMDPHLHT. A helical transmembrane segment spans residues 59–80; it reads PMYFFLSQLSLMDLMLVCTNVP. At 81–101 the chain is on the extracellular side; the sequence is KMAANFLSGRKSISFVGCGIQ. Cysteines 98 and 190 form a disulfide. A helical membrane pass occupies residues 102–121; the sequence is IGLFVCLVGSEGLLLGLMAY. At 122 to 140 the chain is on the cytoplasmic side; the sequence is DRYVAISHPLHYPILMNQR. The chain crosses the membrane as a helical span at residues 141-159; that stretch reads VCLQITGSSWAFGIIDGLI. The Extracellular segment spans residues 160-196; that stretch reads QMVVVMNFPYCGLRKVNHFFCEMLSLLKLACVDTSLF. Residues 197-220 form a helical membrane-spanning segment; sequence EKVIFACCVFMLLFPFSIIVASYA. Over 221-237 the chain is Cytoplasmic; it reads HILGTVLQMHSAQAWKK. The helical transmembrane segment at 238-260 threads the bilayer; the sequence is ALATCSSHLTAVTLFYGAAMFIY. Topologically, residues 261-273 are extracellular; the sequence is LRPRHYRAPSHDK. The helical transmembrane segment at 274–293 threads the bilayer; the sequence is VASIFYTVLTPMLNPLIYSL. Residues 294-315 are Cytoplasmic-facing; it reads RNREVMGALRKGLDRCRIGSQH.

The protein belongs to the G-protein coupled receptor 1 family.

It localises to the cell membrane. Functionally, odorant receptor. The protein is Olfactory receptor 2V2 (OR2V2) of Homo sapiens (Human).